A 327-amino-acid chain; its full sequence is tRNA pseudouridine synthase B (327 aa).

Asp-83 (nucleophile) is an active-site residue.

Belongs to the pseudouridine synthase TruB family. Type 1 subfamily.

The enzyme catalyses uridine(55) in tRNA = pseudouridine(55) in tRNA. Its function is as follows. Responsible for synthesis of pseudouridine from uracil-55 in the psi GC loop of transfer RNAs. In Mesomycoplasma hyopneumoniae (strain 232) (Mycoplasma hyopneumoniae), this protein is tRNA pseudouridine synthase B.